The following is a 692-amino-acid chain: Highly divergent homeobox (692 aa).

Positions 3-63 (LRSVFTVEQQ…NKRRKMSSKS (61 aa)) form a DNA-binding region, homeobox 1. Over residues 117–133 (SSSSKQGTTKHTNTQIT) the composition is skewed to polar residues. The tract at residues 117-136 (SSSSKQGTTKHTNTQITEAH) is disordered. Residues Lys137, Lys142, Lys146, Lys165, Lys174, Lys196, Lys214, Lys223, and Lys234 each participate in a glycyl lysine isopeptide (Lys-Gly) (interchain with G-Cter in SUMO2) cross-link. Residues 437-500 (ALQDRTQFSD…NRRRKYRLMG (64 aa)) constitute a DNA-binding region (homeobox 2). 2 disordered regions span residues 505-541 (PPRG…DNDR) and 647-692 (KDQQ…SDSL). Residues 676–692 (TSLSVSSLSEKNASDSL) show a composition bias toward polar residues.

Its subcellular location is the nucleus. This is Highly divergent homeobox (Hdx) from Mus musculus (Mouse).